Here is a 168-residue protein sequence, read N- to C-terminus: CS3 fimbrial subunit A (168 aa).

Positions 1-22 are cleaved as a signal peptide; it reads MLKIKYLLIGLSLSAMSSYSLA.

In terms of processing, a longer minor form, starting at amino acid 15, has been detected by amino acid sequencing. This is probably due to alternative processing of the signal peptide.

The protein resides in the fimbrium. Its function is as follows. Fimbriae (also called pili), polar filaments radiating from the surface of the bacterium to a length of 0.5-1.5 micrometers and numbering 100-300 per cell, enable bacteria to colonize the epithelium of specific host organs. This Escherichia coli protein is CS3 fimbrial subunit A.